We begin with the raw amino-acid sequence, 81 residues long: uncharacterized protein (81 aa).

Residues 1–31 (MRYNSFLSVLALFNVLLWFTFILAISMTFSA) form the signal peptide. Residues 52–74 (WFFVLLPYVIGLFFAIFDSATIG) form a helical membrane-spanning segment.

The protein resides in the membrane. This is an uncharacterized protein from Pasteurella multocida (strain Pm70).